Here is an 868-residue protein sequence, read N- to C-terminus: LPS-assembly protein LptD (868 aa).

The first 24 residues, 1–24, serve as a signal peptide directing secretion; the sequence is MLKGIHKYLLMCFGTVLFTVQANA.

Belongs to the LptD family. Component of the lipopolysaccharide transport and assembly complex. Interacts with LptE and LptA.

It is found in the cell outer membrane. Functionally, together with LptE, is involved in the assembly of lipopolysaccharide (LPS) at the surface of the outer membrane. In Francisella tularensis subsp. holarctica (strain LVS), this protein is LPS-assembly protein LptD.